A 341-amino-acid polypeptide reads, in one-letter code: UDP-3-O-acylglucosamine N-acyltransferase (341 aa).

The Proton acceptor role is filled by His236.

It belongs to the transferase hexapeptide repeat family. LpxD subfamily. Homotrimer.

It carries out the reaction a UDP-3-O-[(3R)-3-hydroxyacyl]-alpha-D-glucosamine + a (3R)-hydroxyacyl-[ACP] = a UDP-2-N,3-O-bis[(3R)-3-hydroxyacyl]-alpha-D-glucosamine + holo-[ACP] + H(+). It functions in the pathway bacterial outer membrane biogenesis; LPS lipid A biosynthesis. Functionally, catalyzes the N-acylation of UDP-3-O-acylglucosamine using 3-hydroxyacyl-ACP as the acyl donor. Is involved in the biosynthesis of lipid A, a phosphorylated glycolipid that anchors the lipopolysaccharide to the outer membrane of the cell. The chain is UDP-3-O-acylglucosamine N-acyltransferase from Lawsonia intracellularis (strain PHE/MN1-00).